We begin with the raw amino-acid sequence, 576 residues long: Proline--tRNA ligase (576 aa).

It belongs to the class-II aminoacyl-tRNA synthetase family. ProS type 1 subfamily. In terms of assembly, homodimer.

Its subcellular location is the cytoplasm. It catalyses the reaction tRNA(Pro) + L-proline + ATP = L-prolyl-tRNA(Pro) + AMP + diphosphate. Catalyzes the attachment of proline to tRNA(Pro) in a two-step reaction: proline is first activated by ATP to form Pro-AMP and then transferred to the acceptor end of tRNA(Pro). As ProRS can inadvertently accommodate and process non-cognate amino acids such as alanine and cysteine, to avoid such errors it has two additional distinct editing activities against alanine. One activity is designated as 'pretransfer' editing and involves the tRNA(Pro)-independent hydrolysis of activated Ala-AMP. The other activity is designated 'posttransfer' editing and involves deacylation of mischarged Ala-tRNA(Pro). The misacylated Cys-tRNA(Pro) is not edited by ProRS. In Leptospira interrogans serogroup Icterohaemorrhagiae serovar Lai (strain 56601), this protein is Proline--tRNA ligase.